Consider the following 569-residue polypeptide: Adenine deaminase 1 (569 aa).

It belongs to the metallo-dependent hydrolases superfamily. Adenine deaminase family. It depends on Mn(2+) as a cofactor.

The enzyme catalyses adenine + H2O + H(+) = hypoxanthine + NH4(+). The chain is Adenine deaminase 1 from Rhizobium johnstonii (strain DSM 114642 / LMG 32736 / 3841) (Rhizobium leguminosarum bv. viciae).